The following is a 388-amino-acid chain: uncharacterized protein (388 aa).

Belongs to the glycosyltransferase 28 family.

This is an uncharacterized protein from Methanosarcina acetivorans (strain ATCC 35395 / DSM 2834 / JCM 12185 / C2A).